Reading from the N-terminus, the 127-residue chain is Aspartate 1-decarboxylase (127 aa).

The Schiff-base intermediate with substrate; via pyruvic acid role is filled by serine 25. Serine 25 bears the Pyruvic acid (Ser) mark. Threonine 57 lines the substrate pocket. Catalysis depends on tyrosine 58, which acts as the Proton donor. 73 to 75 lines the substrate pocket; the sequence is GAA.

The protein belongs to the PanD family. As to quaternary structure, heterooctamer of four alpha and four beta subunits. Pyruvate is required as a cofactor. In terms of processing, is synthesized initially as an inactive proenzyme, which is activated by self-cleavage at a specific serine bond to produce a beta-subunit with a hydroxyl group at its C-terminus and an alpha-subunit with a pyruvoyl group at its N-terminus.

It localises to the cytoplasm. It catalyses the reaction L-aspartate + H(+) = beta-alanine + CO2. Its pathway is cofactor biosynthesis; (R)-pantothenate biosynthesis; beta-alanine from L-aspartate: step 1/1. In terms of biological role, catalyzes the pyruvoyl-dependent decarboxylation of aspartate to produce beta-alanine. In Clostridium kluyveri (strain NBRC 12016), this protein is Aspartate 1-decarboxylase.